The following is a 580-amino-acid chain: E3 ubiquitin-protein ligase TRIM45 (580 aa).

Residues 29 to 98 (CPLCLGLFKA…QIGILCPVCD (70 aa)) form an RING-type zinc finger. 2 B box-type zinc fingers span residues 130 to 176 (GQGL…MVDL) and 186 to 227 (GKPI…CDFT). Zn(2+) is bound by residues Cys-135, Cys-138, Cys-158, His-162, Cys-191, His-194, Cys-214, and His-219. Residues 281 to 335 (SEGYIKAIEEHRDKLLKQLEDIRAQKENSLQLQKAQLEQLLADMRTGVEFTEHLL) are a coiled coil. One copy of the Filamin repeat lies at 394-497 (TKEVDPAKCV…VQGSPFTVMV (104 aa)).

It belongs to the TRIM/RBCC family. Expressed in skeletal muscle, brain, heart and pancreas.

The protein localises to the cytoplasm. It is found in the nucleus. The catalysed reaction is S-ubiquitinyl-[E2 ubiquitin-conjugating enzyme]-L-cysteine + [acceptor protein]-L-lysine = [E2 ubiquitin-conjugating enzyme]-L-cysteine + N(6)-ubiquitinyl-[acceptor protein]-L-lysine.. In terms of biological role, E3 ubiquitin-protein ligase that plays a role in the regulation of inflammatory response. Mechanistically, mediates the 'Lys-48'-linked polyubiquitination of TAB2, a regulatory protein of the kinase TAK1, leading to its degradation via the proteasomal pathway and inhibition of the TLR-mediated inflammatory immune response. May act as a transcriptional repressor in mitogen-activated protein kinase signaling pathway. In Homo sapiens (Human), this protein is E3 ubiquitin-protein ligase TRIM45 (TRIM45).